Reading from the N-terminus, the 1075-residue chain is Atos homolog protein A (1075 aa).

Residues 24-32 (ALLITEGRT) form a transactivation domain 1 (TAD1) region. Disordered regions lie at residues 430–469 (FGSP…RQPA), 570–592 (YSPQ…PDSI), and 703–766 (LNKN…PHSV). A compositionally biased stretch (basic and acidic residues) spans 440-454 (DSREGKVREKSETRP). Residues 703–712 (LNKNKTNCSS) show a composition bias toward polar residues. Residues 746 to 759 (DRLKTEQEAKRDSG) are compositionally biased toward basic and acidic residues. A required for macropage invasion region spans residues 878-935 (LLGNFEESVLNYRLDPLGIVDGFTAEVGASGTFCPTHLTLPVEVSFYSVSDDNAPSPY). The interval 962 to 970 (FNPNKTVVK) is transactivation domain 2 (TAD2).

The protein belongs to the ATOS family.

Its subcellular location is the nucleus. Transcription regulator that syncronizes transcriptional and translational programs to promote macrophage invasion of tissues. This Mus musculus (Mouse) protein is Atos homolog protein A (Atosa).